Reading from the N-terminus, the 941-residue chain is Coiled-coil and C2 domain-containing protein 1A (941 aa).

T91 bears the Phosphothreonine mark. Disordered stretches follow at residues 183–248 and 301–336; these read TINE…PCSP and SRLP…VPQP. Over residues 228–239 the composition is skewed to polar residues; the sequence is APSTTAQTSAKP. S247 is modified (phosphoserine). Residues 303–318 show a composition bias toward pro residues; the sequence is LPPPPDQLSPEPPLPA. Positions 338–384 form a coiled coil; the sequence is KNLLEALEQRMERYHVAAAQAKAKGDQRKARMHERIVKQYQDAIRAH. Positions 428–482 are disordered; the sequence is ANHEEGSDEEEEETPKKNTPAASTAQPKASPSRAPPSGPAPAGKAASKGTSTRAQ. S434 is modified (phosphoserine). Residues 467–476 are compositionally biased toward low complexity; sequence APAGKAASKG. Residues 475-508 are a coiled coil; that stretch reads KGTSTRAQQQLAFLEGRKKQLLQAALRAKQKNDV. The region spanning 628 to 762 is the C2 domain; that stretch reads RFEQRTFSVI…ETACEVHEIL (135 aa).

The protein belongs to the CC2D1 family. In terms of tissue distribution, strongly expressed in several brain areas including frontal cortex, cortex, mesencephalon, hippocampus, midbrain and hypothalamus. Also expressed in testis and at low levels in pituitary, liver and kidney. In brain the highest levels are detected in hippocampal pyramidal cells and raphe nuclei.

It localises to the cytoplasm. It is found in the nucleus. The protein localises to the cytoskeleton. The protein resides in the microtubule organizing center. Its subcellular location is the centrosome. Transcription factor that binds specifically to the DRE (dual repressor element) and represses 5-HT1A gene transcription though this element. Mediates HDAC-independent repression of HTR1A promoter. CAMK2G inhibits CC2D1a-induced repression of the HTR1A. May play a role in the altered regulation of 5-HT1A receptors associated with anxiety and major depression. Performs essential function in controlling functional maturation of synapses. The sequence is that of Coiled-coil and C2 domain-containing protein 1A (Cc2d1a) from Rattus norvegicus (Rat).